Consider the following 32-residue polypeptide: SYGISSGCFGLKLDRIGTMSGLGCWRLLQDSP.

The cysteines at positions 8 and 24 are disulfide-linked.

The protein belongs to the natriuretic peptide family. Snake NP subfamily. As to expression, expressed by the venom gland.

It localises to the secreted. In terms of biological role, snake venom natriuretic peptide that exhibits hypotensive and vasorelaxant effects. Produces a dose-dependent hypotension in rats, followed by significant increases in concentrations of markers of nitric oxide (NO) formation measured in the plasma and vasorelaxation in a thoracic aortic ring bath. The peptide may exert its hypotensive action, at least in part, through stimulation of NO production. The vasorelaxant effect is endothelium-dependent and does not appear to be mediated by the natriuretic peptide receptor-A, as its action is not modified by isatin (a potent NPR1 antagonist). May act by activating the natriuretic peptide receptor-B (NPR2). In Crotalus lutosus abyssus (Grand Canyon rattlesnake), this protein is Natriuretic peptide Coa_NP2.